A 209-amino-acid chain; its full sequence is Large ribosomal subunit protein uL3c (209 aa).

The tract at residues 132-154 (PMSHGSKNHRLPGSIGAGSTPGR) is disordered.

Belongs to the universal ribosomal protein uL3 family. In terms of assembly, part of the 50S ribosomal subunit.

Its subcellular location is the plastid. It localises to the cyanelle. Functionally, one of the primary rRNA binding proteins, it binds directly near the 3'-end of the 23S rRNA, where it nucleates assembly of the 50S subunit. The chain is Large ribosomal subunit protein uL3c (rpl3) from Cyanophora paradoxa.